The primary structure comprises 82 residues: Putative membrane protein insertion efficiency factor (82 aa).

This sequence belongs to the UPF0161 family.

It localises to the cell inner membrane. Its function is as follows. Could be involved in insertion of integral membrane proteins into the membrane. This chain is Putative membrane protein insertion efficiency factor, found in Rickettsia massiliae (strain Mtu5).